We begin with the raw amino-acid sequence, 37 residues long: Large ribosomal subunit protein bL36 (37 aa).

This sequence belongs to the bacterial ribosomal protein bL36 family.

This is Large ribosomal subunit protein bL36 from Sulfurihydrogenibium sp. (strain YO3AOP1).